The sequence spans 113 residues: Dolichyl-diphosphooligosaccharide--protein glycosyltransferase subunit dad-1 (113 aa).

Residues 1 to 32 (MAAQVVPVLSKLFDDYQKTTSSKLKIIDAYMT) are Cytoplasmic-facing. The chain crosses the membrane as a helical span at residues 33 to 53 (YILFTGIFQFIYCLLVGTFPF). Over 54-55 (NS) the chain is Lumenal. The chain crosses the membrane as a helical span at residues 56–78 (FLSGFISTVTSFVLASCLRMQVN). Residues 79–92 (QENRSEFTAVSTER) lie on the Cytoplasmic side of the membrane. A helical transmembrane segment spans residues 93 to 113 (AFADFIFANLILHLVVVNFLG).

The protein belongs to the DAD/OST2 family. As to quaternary structure, component of the oligosaccharyltransferase (OST) complex.

The protein resides in the endoplasmic reticulum membrane. The protein operates within protein modification; protein glycosylation. Subunit of the oligosaccharyl transferase (OST) complex that catalyzes the initial transfer of a defined glycan (Glc(3)Man(9)GlcNAc(2) in eukaryotes) from the lipid carrier dolichol-pyrophosphate to an asparagine residue within an Asn-X-Ser/Thr consensus motif in nascent polypeptide chains, the first step in protein N-glycosylation. N-glycosylation occurs cotranslationally and the complex associates with the Sec61 complex at the channel-forming translocon complex that mediates protein translocation across the endoplasmic reticulum (ER). All subunits are required for a maximal enzyme activity. Possesses cell death-inhibiting activity. Suppresses some programmed cell death in C.elegans. The chain is Dolichyl-diphosphooligosaccharide--protein glycosyltransferase subunit dad-1 from Caenorhabditis elegans.